A 618-amino-acid chain; its full sequence is 1-deoxy-D-xylulose-5-phosphate synthase (618 aa).

Residues H75 and 116-118 (GHS) each bind thiamine diphosphate. D147 provides a ligand contact to Mg(2+). Thiamine diphosphate is bound by residues 148–149 (GA), N176, Y283, and E364. N176 contacts Mg(2+).

This sequence belongs to the transketolase family. DXPS subfamily. Homodimer. Requires Mg(2+) as cofactor. The cofactor is thiamine diphosphate.

The enzyme catalyses D-glyceraldehyde 3-phosphate + pyruvate + H(+) = 1-deoxy-D-xylulose 5-phosphate + CO2. It participates in metabolic intermediate biosynthesis; 1-deoxy-D-xylulose 5-phosphate biosynthesis; 1-deoxy-D-xylulose 5-phosphate from D-glyceraldehyde 3-phosphate and pyruvate: step 1/1. Its function is as follows. Catalyzes the acyloin condensation reaction between C atoms 2 and 3 of pyruvate and glyceraldehyde 3-phosphate to yield 1-deoxy-D-xylulose-5-phosphate (DXP). The sequence is that of 1-deoxy-D-xylulose-5-phosphate synthase from Thiobacillus denitrificans (strain ATCC 25259 / T1).